We begin with the raw amino-acid sequence, 319 residues long: 1-aminocyclopropane-1-carboxylate oxidase (319 aa).

One can recognise a Fe2OG dioxygenase domain in the interval 152–253 (GPNFGSKVSN…RMSLASFYNP (102 aa)). Positions 177, 179, and 234 each coordinate Fe cation.

This sequence belongs to the iron/ascorbate-dependent oxidoreductase family. Fe cation is required as a cofactor.

It carries out the reaction 1-aminocyclopropane-1-carboxylate + L-ascorbate + O2 = ethene + L-dehydroascorbate + hydrogen cyanide + CO2 + 2 H2O. It participates in alkene biosynthesis; ethylene biosynthesis via S-adenosyl-L-methionine; ethylene from S-adenosyl-L-methionine: step 2/2. This is 1-aminocyclopropane-1-carboxylate oxidase (ACO) from Nicotiana tabacum (Common tobacco).